The chain runs to 240 residues: MVALISKKRKLVADGVFYAELNEFFTRELAEEGYSGVEVRVTPTKTEVIIRATRTQDVLGENGRRINELTLLVQKRFKYAPGTIVLYAERVQDRGLSAVAQAESMKFKLLNGLAIRRAAYGVVRYVMESGAKGCEVVVSGKLRAARAKAMKFADGFLIHSGQPVNDFIDTATRHVLMRQGVLGIKVKIMRDPAKSRTGPKALPDAVTIIEPKEEEPILAPSVKDYRPAEETEAQAEPVEA.

Residues L21–Q92 form the KH type-2 domain. Phosphothreonine is present on residues T44 and T70. S97 carries the post-translational modification Phosphoserine. K106 participates in a covalent cross-link: Glycyl lysine isopeptide (Lys-Gly) (interchain with G-Cter in ubiquitin). Phosphoserine is present on S129. Glycyl lysine isopeptide (Lys-Gly) (interchain with G-Cter in ubiquitin) cross-links involve residues K132 and K141. Position 146 is an omega-N-methylarginine; by SFM1 (R146). Residues K151, K200, and K212 each participate in a glycyl lysine isopeptide (Lys-Gly) (interchain with G-Cter in ubiquitin) cross-link. Positions K212–A240 are disordered. At S221 the chain carries Phosphoserine. Over residues E230–A240 the composition is skewed to acidic residues. At T231 the chain carries Phosphothreonine.

It belongs to the universal ribosomal protein uS3 family. In terms of assembly, component of the small ribosomal subunit (SSU). Mature yeast ribosomes consist of a small (40S) and a large (60S) subunit. The 40S small subunit contains 1 molecule of ribosomal RNA (18S rRNA) and 33 different proteins (encoded by 57 genes). The large 60S subunit contains 3 rRNA molecules (25S, 5.8S and 5S rRNA) and 46 different proteins (encoded by 81 genes). In terms of processing, ubiquitinated at Lys-212 in response to stalled ribosomes. Ubiquitination leads to activation of the No-Go Decay (NGD) pathway and degradation of non-functional 18S rRNA: first monoubiquitinated at Lys-212 by MAG2, followed by formation of 'Lys-63'-linked polyubiquitin chains on monoubiquitin by HEL2 and RSP5.

The protein localises to the cytoplasm. Its function is as follows. Component of the ribosome, a large ribonucleoprotein complex responsible for the synthesis of proteins in the cell. The small ribosomal subunit (SSU) binds messenger RNAs (mRNAs) and translates the encoded message by selecting cognate aminoacyl-transfer RNA (tRNA) molecules. The large subunit (LSU) contains the ribosomal catalytic site termed the peptidyl transferase center (PTC), which catalyzes the formation of peptide bonds, thereby polymerizing the amino acids delivered by tRNAs into a polypeptide chain. The nascent polypeptides leave the ribosome through a tunnel in the LSU and interact with protein factors that function in enzymatic processing, targeting, and the membrane insertion of nascent chains at the exit of the ribosomal tunnel. This Saccharomyces cerevisiae (strain ATCC 204508 / S288c) (Baker's yeast) protein is Small ribosomal subunit protein uS3.